The chain runs to 308 residues: Aspartate carbamoyltransferase catalytic subunit (308 aa).

Arg59 and Thr60 together coordinate carbamoyl phosphate. Lys87 contributes to the L-aspartate binding site. Residues Arg109, His139, and Gln142 each coordinate carbamoyl phosphate. L-aspartate-binding residues include Arg172 and Arg224. Positions 265 and 266 each coordinate carbamoyl phosphate.

Belongs to the aspartate/ornithine carbamoyltransferase superfamily. ATCase family. As to quaternary structure, heterododecamer (2C3:3R2) of six catalytic PyrB chains organized as two trimers (C3), and six regulatory PyrI chains organized as three dimers (R2).

It carries out the reaction carbamoyl phosphate + L-aspartate = N-carbamoyl-L-aspartate + phosphate + H(+). It functions in the pathway pyrimidine metabolism; UMP biosynthesis via de novo pathway; (S)-dihydroorotate from bicarbonate: step 2/3. In terms of biological role, catalyzes the condensation of carbamoyl phosphate and aspartate to form carbamoyl aspartate and inorganic phosphate, the committed step in the de novo pyrimidine nucleotide biosynthesis pathway. The protein is Aspartate carbamoyltransferase catalytic subunit of Enterococcus faecalis (strain ATCC 700802 / V583).